Reading from the N-terminus, the 202-residue chain is Small ribosomal subunit protein uS4 (202 aa).

Over residues 1–13 (MSRYRGPRLRVTR) the composition is skewed to basic residues. The interval 1-42 (MSRYRGPRLRVTRRLGELPGLTRKASKKSNPPGQHGQARRKR) is disordered. The S4 RNA-binding domain occupies 90–152 (NRLDNVCFRL…KASKKLVEGN (63 aa)).

The protein belongs to the universal ribosomal protein uS4 family. Part of the 30S ribosomal subunit. Contacts protein S5. The interaction surface between S4 and S5 is involved in control of translational fidelity.

One of the primary rRNA binding proteins, it binds directly to 16S rRNA where it nucleates assembly of the body of the 30S subunit. Its function is as follows. With S5 and S12 plays an important role in translational accuracy. In Prochlorococcus marinus (strain AS9601), this protein is Small ribosomal subunit protein uS4.